Reading from the N-terminus, the 1254-residue chain is Juxtamembrane domain-associated catenin (1254 aa).

3 disordered regions span residues 1–38 (MISSGWMQEMEPIPEEGTEADGSEWGAMSDTAKRTMRK), 84–106 (AGPTSARGSSYSYSYESHYDNPP), and 145–209 (PYSN…SAPG). Over residues 12–22 (PIPEEGTEADG) the composition is skewed to acidic residues. Over residues 145–157 (PYSNIDFDSSGLP) the composition is skewed to polar residues. Fibronectin type-III domains are found at residues 207–302 (APGV…IPIS), 315–411 (APGR…IRPA), 428–518 (PPGQ…LRPT), and 530–624 (ILEA…IEPS). The interval 412-433 (APQRHVPARKVSESVQPPGQPQ) is disordered. Residues 662-685 (MVRESPPLPERDDSPPPLRRANNN) form a disordered region. 5 ARM repeats span residues 733-775 (GGIP…AVME), 777-820 (DGVR…ESAT), 874-922 (NLIE…YDPA), 969-1012 (HVVK…RAAV), and 1016-1058 (KGLP…KYAL). Positions 920–960 (DPAAAHSSSSKNMKHVASPKPEKKKKDKEKKKDKNPKNIVT) are disordered. The segment at 1159–1254 (GTARRGDSST…GGGNIDDSWV (96 aa)) is disordered. Polar residues predominate over residues 1166-1176 (SSTLARPISSQ). The segment covering 1177-1187 (GRERPSMHQLD) has biased composition (basic and acidic residues).

Belongs to the beta-catenin family. Associated with the catenin-cadherin complex consisting of hmr-1, hmp-1 and hmp-2. Interacts with hmr-1. Interacts with picc-1. As to expression, epidermal cells.

The protein localises to the cell junction. It localises to the adherens junction. It is found in the nucleus. In terms of biological role, may act as a positive modulator of hmr-1 function during epidermal morphogenesis. Required for proper localization of other junctional components, such as pac-1. This chain is Juxtamembrane domain-associated catenin (jac-1), found in Caenorhabditis elegans.